A 148-amino-acid chain; its full sequence is Probable histone H2B.1 (148 aa).

Over residues 1 to 32 the composition is skewed to basic and acidic residues; it reads MAPKGEKKPAEKKPAEEKKSTVAEKAPAEKKP. Residues 1–57 form a disordered region; sequence MAPKGEKKPAEKKPAEEKKSTVAEKAPAEKKPKAGKKLPKEGGSAAGEKKKKRSKKS. Lys-7, Lys-36, and Lys-37 each carry N6-acetyllysine. A Glycyl lysine isopeptide (Lys-Gly) (interchain with G-Cter in ubiquitin) cross-link involves residue Lys-144.

It belongs to the histone H2B family. In terms of assembly, the nucleosome is a histone octamer containing two molecules each of H2A, H2B, H3 and H4 assembled in one H3-H4 heterotetramer and two H2A-H2B heterodimers. The octamer wraps approximately 147 bp of DNA. Post-translationally, can be acetylated to form H2BK6ac, H2BK33ac and H2BK34ac. Monoubiquitinated to form H2BK143ub1; may give a specific tag for epigenetic transcriptional activation.

Its subcellular location is the nucleus. The protein localises to the chromosome. Its function is as follows. Core component of nucleosome. Nucleosomes wrap and compact DNA into chromatin, limiting DNA accessibility to the cellular machineries which require DNA as a template. Histones thereby play a central role in transcription regulation, DNA repair, DNA replication and chromosomal stability. DNA accessibility is regulated via a complex set of post-translational modifications of histones, also called histone code, and nucleosome remodeling. In Medicago truncatula (Barrel medic), this protein is Probable histone H2B.1.